The primary structure comprises 524 residues: Leucine-rich repeat-containing protein 1 (524 aa).

LRR repeat units lie at residues 11-34, 35-58, 60-81, 83-105, 107-126, 127-149, 150-172, 173-196, 198-218, 219-242, 244-264, 265-288, 290-310, 311-334, 336-356, 357-380, and 382-405; these read NRHV…IYRY, ARSL…FFQL, KLRK…IANF, QLVE…SFCK, LQVA…SFPE, LQNL…NIGN, LYNL…SLTQ, LRRL…IGAL, HLKD…EIGN, LKNL…ISGL, SLTD…GIGK, LKKL…VGEC, SLTE…SIGK, LKKL…IGGC, SLTV…EVSQ, ATEL…LTAL, and LKAL…TDYT. Thr-480 bears the Phosphothreonine mark. Positions 484–512 form a coiled coil; that stretch reads GELKHMKKTVENLRNDMNAAKGLDSNKNE.

As to quaternary structure, interacts with DLG1 and DLG4. May form a complex with DLG1 and ERBIN, where interaction between LRRC1 and ERBIN is indirect. In terms of tissue distribution, expressed strongly in testis and placenta, followed by heart, lung, kidney, thyroid, trachea, colon, prostate and pancreas.

Its subcellular location is the cytoplasm. It localises to the membrane. The polypeptide is Leucine-rich repeat-containing protein 1 (LRRC1) (Homo sapiens (Human)).